A 248-amino-acid chain; its full sequence is Metallo-beta-lactamase type 2 (248 aa).

A signal peptide spans 1–21; sequence MKGLKGLLVLALGFTGLQVFG. Residues histidine 97, histidine 99, aspartate 101, histidine 160, and cysteine 179 each coordinate Zn(2+). Lysine 182 is a substrate binding site. Histidine 221 contacts Zn(2+).

Belongs to the metallo-beta-lactamase superfamily. Class-B beta-lactamase family. Monomer. Zn(2+) is required as a cofactor.

It localises to the periplasm. The catalysed reaction is a beta-lactam + H2O = a substituted beta-amino acid. In terms of biological role, confers resistance to the different beta-lactams antibiotics (penicillin, cephalosporin and carbapenem) via the hydrolysis of the beta-lactam ring. The sequence is that of Metallo-beta-lactamase type 2 (blaB8) from Elizabethkingia meningoseptica (Chryseobacterium meningosepticum).